The primary structure comprises 361 residues: Phospho-N-acetylmuramoyl-pentapeptide-transferase (361 aa).

10 helical membrane-spanning segments follow: residues 28-48 (LAII…IKFL), 74-94 (TMGG…LADL), 99-119 (TWIT…DDYA), 133-153 (SKLL…EYLD), 168-188 (LSLD…VGSS), 203-223 (VPIA…GNLI), 236-256 (TGEL…FLWF), 263-283 (VFMG…ISVI), 288-308 (IVLA…ILQV), and 338-358 (KVVI…LSSL).

The protein belongs to the glycosyltransferase 4 family. MraY subfamily. Mg(2+) is required as a cofactor.

Its subcellular location is the cell inner membrane. It catalyses the reaction UDP-N-acetyl-alpha-D-muramoyl-L-alanyl-gamma-D-glutamyl-meso-2,6-diaminopimeloyl-D-alanyl-D-alanine + di-trans,octa-cis-undecaprenyl phosphate = di-trans,octa-cis-undecaprenyl diphospho-N-acetyl-alpha-D-muramoyl-L-alanyl-D-glutamyl-meso-2,6-diaminopimeloyl-D-alanyl-D-alanine + UMP. It functions in the pathway cell wall biogenesis; peptidoglycan biosynthesis. Its function is as follows. Catalyzes the initial step of the lipid cycle reactions in the biosynthesis of the cell wall peptidoglycan: transfers peptidoglycan precursor phospho-MurNAc-pentapeptide from UDP-MurNAc-pentapeptide onto the lipid carrier undecaprenyl phosphate, yielding undecaprenyl-pyrophosphoryl-MurNAc-pentapeptide, known as lipid I. This Rickettsia massiliae (strain Mtu5) protein is Phospho-N-acetylmuramoyl-pentapeptide-transferase.